Consider the following 897-residue polypeptide: High molecular weight rhoptry protein 3 (897 aa).

An N-terminal signal peptide occupies residues 1 to 24; that stretch reads MRSKHLVTLFIITFLSFSTVKVWG. 5 disulfides stabilise this stretch: Cys157-Cys231, Cys244-Cys253, Cys262-Cys276, Cys421-Cys620, and Cys475-Cys536. A helical membrane pass occupies residues 597–615; that stretch reads FVLYFISIISVLYINEYYY. Disordered stretches follow at residues 788 to 845 and 859 to 897; these read KEQS…SNLK and QLDK…ENEL. Residues 792 to 801 are compositionally biased toward polar residues; sequence KSTSAASTSD. A compositionally biased stretch (low complexity) spans 802–817; that stretch reads EISGSEGPSTESTSTG. Ser804 bears the Phosphoserine; by CDPK1 mark. Over residues 820–832 the composition is skewed to basic and acidic residues; the sequence is GEDKTTDNTYKEM. The span at 865 to 876 shows a compositional bias: basic residues; sequence PKKKKSKRKKKR. Residues 877-889 are compositionally biased toward basic and acidic residues; it reads DSSSDRILLEESK.

In terms of assembly, component of the RhopH complex. RhopH complex is composed of CLAG3.1/CLAG3.2, RhopH2 and RhopH3 with a 1:1:1 subunit stoichiometry. Interacts with CLAG3.1/CLAG3.2. Interacts with CDPK1; the interaction promotes RhopH3 phosphorylation in merozoites. Post-translationally, proteolytically cleaved near C-terminus.

The protein resides in the host cell membrane. It localises to the parasitophorous vacuole membrane. The protein localises to the cytoplasm. It is found in the cytoplasmic vesicle. Its subcellular location is the secretory vesicle. The protein resides in the rhoptry. In terms of biological role, participates in the formation of new permeability pathways in Plasmodium-infected erythrocytes enabling the uptake of nutrients from the blood plasma. Required for maintaining invasion capacity of merozoites. Required for the trophozoite to schizont developmental transition of the intracellular parasite. This is High molecular weight rhoptry protein 3 from Plasmodium falciparum (isolate 3D7).